The primary structure comprises 453 residues: Flavonol-3-O-rhamnosyltransferase (453 aa).

H24 acts as the Proton acceptor in catalysis. Position 24 (H24) interacts with an anthocyanidin. D119 acts as the Charge relay in catalysis. An anthocyanidin is bound at residue H150. The UDP-beta-L-rhamnose site is built by T280, A333, H350, N354, S355, and E358. Residue A373 coordinates an anthocyanidin.

It belongs to the UDP-glycosyltransferase family. In terms of tissue distribution, expressed in leaves, flowers, siliques, and stems. Expressed in the shoot apex.

It catalyses the reaction kaempferol + UDP-beta-L-rhamnose = kaempferol 3-O-alpha-L-rhamnoside + UDP + H(+). It carries out the reaction UDP-beta-L-rhamnose + quercetin = quercitrin + UDP + H(+). It functions in the pathway flavonoid metabolism. In terms of biological role, flavonol 3-O-rhamnosyltransferase that catalyzes the transfer of rhamnose from UDP-rhamnose to the 3-OH position of kaempferol and quercetin. Possesses low quercetin 3-O-glucosyltransferase activity in vitro. This Arabidopsis thaliana (Mouse-ear cress) protein is Flavonol-3-O-rhamnosyltransferase.